The chain runs to 383 residues: Plant intracellular Ras-group-related LRR protein 8 (383 aa).

LRR repeat units follow at residues 56 to 79 (RQNI…SINL), 80 to 102 (ASIS…LVAR), 104 to 126 (LNLW…IGCL), 127 to 149 (SKLK…IEDC), 151 to 173 (SLEE…GFEL), 174 to 197 (TNLT…SYLT), 199 to 219 (LRVL…LENL), 221 to 244 (NLQV…VGLL), 245 to 268 (ISLV…GCLR), and 270 to 290 (IQKL…VVEQ). The short motif at 291 to 298 (GLEALKQY) is the GVYW; degenerate element.

This sequence belongs to the SHOC2 family. As to expression, widely expressed except flowers.

In terms of biological role, leucine-rich repeat protein that likely mediates protein interactions, possibly in the context of signal transduction. In Arabidopsis thaliana (Mouse-ear cress), this protein is Plant intracellular Ras-group-related LRR protein 8 (PIRL8).